The following is a 106-amino-acid chain: ATP-dependent Clp protease adapter protein ClpS (106 aa).

This sequence belongs to the ClpS family. In terms of assembly, binds to the N-terminal domain of the chaperone ClpA.

Functionally, involved in the modulation of the specificity of the ClpAP-mediated ATP-dependent protein degradation. In Vibrio atlanticus (strain LGP32) (Vibrio splendidus (strain Mel32)), this protein is ATP-dependent Clp protease adapter protein ClpS.